Here is a 191-residue protein sequence, read N- to C-terminus: Guanylate kinase (191 aa).

Residues 4–182 (GRLIVVSGPS…AREEMIEIMR (179 aa)) form the Guanylate kinase-like domain. 11 to 18 (GPSGAGKS) contacts ATP.

It belongs to the guanylate kinase family.

It localises to the cytoplasm. It carries out the reaction GMP + ATP = GDP + ADP. In terms of biological role, essential for recycling GMP and indirectly, cGMP. The polypeptide is Guanylate kinase (Rubrobacter xylanophilus (strain DSM 9941 / JCM 11954 / NBRC 16129 / PRD-1)).